A 740-amino-acid chain; its full sequence is Ethylene receptor 1 (740 aa).

The next 3 membrane-spanning stretches (helical) occupy residues 23–43, 53–73, and 92–112; these read ISDFFIALAYFSIPLELIYFV, WVLVQFGAFIVLCGATHLINL, and VLTAVVSCATALMLVHIIPDL. Cu cation contacts are provided by C65 and H69. The GAF domain maps to 158-307; sequence DRHTILKTTL…VVADQVAVAL (150 aa). Residues 350–588 form the Histidine kinase domain; sequence VMNHEMRTPM…TFIVKLGIAE (239 aa). H353 is subject to Phosphohistidine; by autocatalysis. The 118-residue stretch at 614-731 folds into the Response regulatory domain; it reads KVLVMDDNGV…KMRSVLSELI (118 aa). D662 bears the 4-aspartylphosphate mark.

This sequence belongs to the ethylene receptor family. In terms of assembly, homodimer; disulfide-linked. The cofactor is Cu cation. In terms of processing, activation probably requires a transfer of a phosphate group between a His in the transmitter domain and an Asp of the receiver domain.

It is found in the endoplasmic reticulum membrane. The enzyme catalyses ATP + protein L-histidine = ADP + protein N-phospho-L-histidine.. May act early in the ethylene signal transduction pathway, possibly as an ethylene receptor, or as a regulator of the pathway. The sequence is that of Ethylene receptor 1 (ETR1) from Cucumis sativus (Cucumber).